Reading from the N-terminus, the 308-residue chain is Oligopeptide transport ATP-binding protein OppF (308 aa).

Residues 9–254 (VEVKNVSLTF…PIHPYTQSLL (246 aa)) form the ABC transporter domain. Residue 46–53 (GESGSGKT) participates in ATP binding.

It belongs to the ABC transporter superfamily. The complex is composed of two ATP-binding proteins (OppD and OppF), two transmembrane proteins (OppB and OppC) and a solute-binding protein (OppA).

The protein localises to the cell membrane. It catalyses the reaction a [peptide](out) + ATP + H2O = a [peptide](in) + ADP + phosphate + H(+). Functionally, part of the ABC transporter complex OppABCDF involved in the uptake of oligopeptides. Probably responsible for energy coupling to the transport system. In Streptococcus mutans serotype c (strain ATCC 700610 / UA159), this protein is Oligopeptide transport ATP-binding protein OppF (oppF).